Reading from the N-terminus, the 236-residue chain is Ribose-5-phosphate isomerase A (236 aa).

Substrate is bound by residues 29-32 (SGST), 86-89 (DGAD), and 99-102 (KGGG). Residue Glu-108 is the Proton acceptor of the active site. Lys-126 contacts substrate.

Belongs to the ribose 5-phosphate isomerase family. Homodimer.

The catalysed reaction is aldehydo-D-ribose 5-phosphate = D-ribulose 5-phosphate. The protein operates within carbohydrate degradation; pentose phosphate pathway; D-ribose 5-phosphate from D-ribulose 5-phosphate (non-oxidative stage): step 1/1. Its function is as follows. Catalyzes the reversible conversion of ribose-5-phosphate to ribulose 5-phosphate. This is Ribose-5-phosphate isomerase A from Prochlorococcus marinus (strain NATL2A).